We begin with the raw amino-acid sequence, 281 residues long: Ras-related protein Rab-40C (281 aa).

GTP-binding residues include Ser23, Gly26, Lys27, and Ser46. The tract at residues 41–49 (SPYAYSNGI) is switch-I. Residues Ser46 and Asp69 each coordinate Mg(2+). GTP contacts are provided by Gly72, Asn126, and Arg127. Positions 72–88 (GQGRFCTIFRSYSRGAQ) are switch-II. The SOCS box domain occupies 175-228 (LMRHGMEKIWRPNRVFSLQDLCCRAIVSCTPVHLIDKLPLPVTIKSHLKSFSMA). Residues 245–281 (SGAGGGGSKGNSLKRSKSIRPPQSPPQNCSRSNCKIS) are disordered. The segment covering 270 to 281 (PQNCSRSNCKIS) has biased composition (polar residues). Cys273 carries the S-palmitoyl cysteine lipid modification. Cys278 is lipidated: S-geranylgeranyl cysteine.

The protein belongs to the small GTPase superfamily. Rab family. Component of the cullin-5-RING E3 ubiquitin-protein ligase complex (ECS(RAB40C) complex) composed of CUL5, Elongin BC (ELOB and ELOC), RNF7/RBX2 and RAB40C. Interacts with protein phosphatase 6 (PP6) complex components ANKRD28, ANKRD52, PPP6C, PP6R1 and PP6R2; the interaction leads to ANKRD28 ubiquitination and decreased PP6 activity. Interacts with DAB2IP; DAB2IP acts as a GAP for RAB40C. Mg(2+) is required as a cofactor.

Its subcellular location is the cell membrane. The protein localises to the cytoplasm. The protein resides in the cytosol. It localises to the golgi apparatus membrane. The catalysed reaction is GTP + H2O = GDP + phosphate + H(+). Its pathway is protein modification; protein ubiquitination. Its activity is regulated as follows. Regulated by guanine nucleotide exchange factors (GEFs) which promote the exchange of bound GDP for free GTP. Regulated by GTPase activating proteins (GAPs) including DAB2IP, which increase the GTP hydrolysis activity. Inhibited by GDP dissociation inhibitors (GDIs). Functionally, RAB40C small GTPase acts as substrate-recognition component of the ECS(RAB40C) E3 ubiquitin ligase complex which mediates the ubiquitination and subsequent proteasomal degradation of target proteins. The Rab40 subfamily belongs to the Rab family that are key regulators of intracellular membrane trafficking, from the formation of transport vesicles to their fusion with membranes. Rabs cycle between an inactive GDP-bound form and an active GTP-bound form that is able to recruit to membranes different sets of downstream effectors directly responsible for vesicle formation, movement, tethering and fusion. As part of the ECS(RAB40C) complex, mediates ANKRD28 ubiquitination and degradation, thereby inhibiting protein phosphatase 6 (PP6) complex activity and focal adhesion assembly during cell migration. Also negatively regulate lipid droplets accumulation in a GTP-dependent manner. This chain is Ras-related protein Rab-40C, found in Homo sapiens (Human).